Here is a 124-residue protein sequence, read N- to C-terminus: Small ribosomal subunit protein uS12 (124 aa).

Residues 1–25 (MARINQLVRKPRRARAKKSDVPALE) are disordered. Asp-89 is modified (3-methylthioaspartic acid). The disordered stretch occupies residues 103–124 (DTAGVSGRRRGRSKYGEKKPKE).

It belongs to the universal ribosomal protein uS12 family. As to quaternary structure, part of the 30S ribosomal subunit. Contacts proteins S8 and S17. May interact with IF1 in the 30S initiation complex.

With S4 and S5 plays an important role in translational accuracy. In terms of biological role, interacts with and stabilizes bases of the 16S rRNA that are involved in tRNA selection in the A site and with the mRNA backbone. Located at the interface of the 30S and 50S subunits, it traverses the body of the 30S subunit contacting proteins on the other side and probably holding the rRNA structure together. The combined cluster of proteins S8, S12 and S17 appears to hold together the shoulder and platform of the 30S subunit. The chain is Small ribosomal subunit protein uS12 from Coxiella burnetii (strain Dugway 5J108-111).